A 344-amino-acid chain; its full sequence is Phenylalanine--tRNA ligase alpha subunit (344 aa).

Glu256 is a binding site for Mg(2+).

It belongs to the class-II aminoacyl-tRNA synthetase family. Phe-tRNA synthetase alpha subunit type 1 subfamily. In terms of assembly, tetramer of two alpha and two beta subunits. Mg(2+) serves as cofactor.

It is found in the cytoplasm. It catalyses the reaction tRNA(Phe) + L-phenylalanine + ATP = L-phenylalanyl-tRNA(Phe) + AMP + diphosphate + H(+). The polypeptide is Phenylalanine--tRNA ligase alpha subunit (pheS) (Bacillus subtilis (strain 168)).